Reading from the N-terminus, the 595-residue chain is Aspartate--tRNA ligase (595 aa).

Residue E171 participates in L-aspartate binding. Residues 195–198 form an aspartate region; that stretch reads QLFK. An L-aspartate-binding site is contributed by R217. ATP is bound by residues 217–219 and Q226; that span reads RDE. H448 is an L-aspartate binding site. E482 provides a ligand contact to ATP. R489 contacts L-aspartate. 534–537 contacts ATP; sequence GLDR.

Belongs to the class-II aminoacyl-tRNA synthetase family. Type 1 subfamily. As to quaternary structure, homodimer.

The protein localises to the cytoplasm. The enzyme catalyses tRNA(Asp) + L-aspartate + ATP = L-aspartyl-tRNA(Asp) + AMP + diphosphate. In terms of biological role, catalyzes the attachment of L-aspartate to tRNA(Asp) in a two-step reaction: L-aspartate is first activated by ATP to form Asp-AMP and then transferred to the acceptor end of tRNA(Asp). The sequence is that of Aspartate--tRNA ligase from Erwinia tasmaniensis (strain DSM 17950 / CFBP 7177 / CIP 109463 / NCPPB 4357 / Et1/99).